Reading from the N-terminus, the 420-residue chain is COP9 signalosome complex subunit 11 (420 aa).

A PCI domain is found at 177–346 (SIHEHPSLVD…VYYKEDLPVG (170 aa)). The disordered stretch occupies residues 386-420 (VEPLNRSQDMDAFELHEQSEDEEYEEEHLEEGENV). Residues 404-420 (SEDEEYEEEHLEEGENV) show a composition bias toward acidic residues.

Component of a COP9 signalosome-like (CSN) complex.

Its subcellular location is the cytoplasm. The protein resides in the nucleus. Functionally, component of the COP9 signalosome (CSN) complex that acts as an regulator of the ubiquitin (Ubl) conjugation pathway by mediating the deneddylation of the cullin subunit of SCF-type E3 ubiquitin-protein ligase complexes The CSN complex is involved in the regulation of the mating pheromone response. PCI8 may also be involved in transcriptional and translational control. In Eremothecium gossypii (strain ATCC 10895 / CBS 109.51 / FGSC 9923 / NRRL Y-1056) (Yeast), this protein is COP9 signalosome complex subunit 11 (PCI8).